A 143-amino-acid chain; its full sequence is Transcriptional regulator MraZ (143 aa).

2 consecutive SpoVT-AbrB domains span residues 5–47 (EFQH…TLTE) and 76–119 (AVEV…DRKL).

This sequence belongs to the MraZ family. Forms oligomers.

The protein resides in the cytoplasm. It is found in the nucleoid. In Macrococcus caseolyticus (strain JCSC5402) (Macrococcoides caseolyticum), this protein is Transcriptional regulator MraZ.